A 574-amino-acid polypeptide reads, in one-letter code: MYIRRLNDQTANQIAAGEVVERPASVVKELIENSIDAHASCIRVDILQGGAKQIRIQDDGDGIHPEDLVLALERHATSKIAKIDDLQDITTLGFRGEALASISAVSRLTLTSRQKNAEMGYRISNISHKIMTPVPAAHPQGTTIDVQDLFYNTPARRKFLRSPATEFQHIRRIIERLALSHFTTEFLLHHNEKEIIHFKSATTISGQENRIKSILGDVFMQSALAIEFSQSGLTLKGYIAEAAYTRSQPDLQYIYVNGRFVRDKLVAQALRQAYHDVLFHGRHPAYVLYLEIDPAFVDINVHPTKHEVRFRDPQWVRDFLIHAVKTALAQAKPGIVHPLPQSTAEYNPITNFAPTPLIEGQGNLSLIQEQPAPYTQTIVHKHPLGHALAQLQGIYILSQNEKGLVIVDMHAAHERILYEKMKKQLAEVGLAMQSLLVPINLSLNPQEITAWQTNKALFARLGFEIESFGPDKIVVRRHPSLLKPKNLENLIRDVLADLITHNTTSRVGERINAALATLACHAALRAPHYLTIEEMEALLREMEKTEHGGLCNHGRPTWKQFDIAELDTFFLRGQ.

It belongs to the DNA mismatch repair MutL/HexB family.

This protein is involved in the repair of mismatches in DNA. It is required for dam-dependent methyl-directed DNA mismatch repair. May act as a 'molecular matchmaker', a protein that promotes the formation of a stable complex between two or more DNA-binding proteins in an ATP-dependent manner without itself being part of a final effector complex. The polypeptide is DNA mismatch repair protein MutL (Coxiella burnetii (strain RSA 331 / Henzerling II)).